The sequence spans 512 residues: Maturase K (512 aa).

The protein belongs to the intron maturase 2 family. MatK subfamily.

It localises to the plastid. The protein localises to the chloroplast. Usually encoded in the trnK tRNA gene intron. Probably assists in splicing its own and other chloroplast group II introns. The polypeptide is Maturase K (Zantedeschia aethiopica (White calla lily)).